A 245-amino-acid chain; its full sequence is Uracil-DNA glycosylase (245 aa).

D82 serves as the catalytic Proton acceptor.

The protein belongs to the uracil-DNA glycosylase (UDG) superfamily. UNG family.

Its subcellular location is the cytoplasm. It carries out the reaction Hydrolyzes single-stranded DNA or mismatched double-stranded DNA and polynucleotides, releasing free uracil.. Its function is as follows. Excises uracil residues from the DNA which can arise as a result of misincorporation of dUMP residues by DNA polymerase or due to deamination of cytosine. The chain is Uracil-DNA glycosylase from Deinococcus geothermalis (strain DSM 11300 / CIP 105573 / AG-3a).